The sequence spans 1130 residues: MATSLITRKLRSAEATNDVEPGWLKRQVTGVLQSISSHACQHPIHTIVVIALLASTTYVGLLEGSLFDSVRNSRNIAGQVDVDTLLQGSRNLRLGESTSWKWQVEDSLASQDYTGVNHLALTTFIFSDSLSKSSSIAPAATELPIPSNASAQPVPFTPNLFSPFSHDSSLAFTLPFDQVPQFLKAVQEIPDTSSDEDDGEQKKWIMRAARGSAYGSGGAIKLWLADAWGSFVDLIKHAETIDIVIMTLGYLSMHLSFVSLFFSMRRLGSNFWLAATVLFSGVFAFLFGLLVTTKLGVPINVLLLSEGLPFLVVTIGFEKPIILTRAVLTAAADNRGRAGQASSSTTKSIQDSIQTAIKEQGFEIIRDYCIEIAILIAGAASGVQGGLRQFCFLAAWILFFDCVLLFTFYTTILCIKLEINRIKRHITLRKALEEDGITHRVAENVASSNDWPLTESESSNKTSIFGRKLRSSSVRRFKILMVGGFVLVNVVNLSTIPFRDSSQGAGLPLLSRVSNVFAPTPIDPFKVAENGLDSIYVSAKSQMMETVVTVIPPIKYKLEYPSVYYAALGESRTFDIEYTDQFLDAVGGRVIESLLKSIEDPIISKWIIAALTLSIILNGYLFNAARWSIKEPEVAPVPAAPTVAVVEAKKEYPKIDLNPDTPKRSLEECEAFLKEKRAAYLSDEELIELSLRGKIPGYALEKTMENEDLMSRVDAFTRAVKIRRAVVARTPATSAITGSLECSKLPYKDYNYTLVHGACCENVIGYLPLPLGVAGPLTIDGQSYFIPMATTEGVLVASTSRGAKAINAGGGAVTVLTGDGMTRGPCVGFPTLARAAAAKVWIDSEEGRSILTAAFNSTSRFARLQHLKTALAGTYLYIRFKTTTGDAMGMNMISKGVEKALHVMATECGFDDMATISVSGNFCTDKKAAAINWIDGRGKSVVAEAIIPGDVVRSVLKSDVNALVELNTSKNLIGSAMAGSVGGFNAHASNIVTAVFLATGQDPAQNVESSSCITTMRNLNGNLQIAVSMPSIEVGTIGGGTILEAQSAMLDMLGVRGSHPTNPGDNARQLARIVAAAVLAGELSLCSALAAGHLVRAHMAHNRSAATTRTSTPVSAAVSAARGLTMSSSE.

Residues Met-1–Thr-46 lie on the Cytoplasmic side of the membrane. The helical transmembrane segment at Ile-47–Phe-67 threads the bilayer. Residues Asp-68 to Asp-242 lie on the Lumenal side of the membrane. The N-linked (GlcNAc...) asparagine glycan is linked to Asn-148. The region spanning Asp-242 to Ile-415 is the SSD domain. The chain crosses the membrane as a helical span at residues Ile-243–Ser-263. The Cytoplasmic portion of the chain corresponds to Met-264–Asn-270. A helical transmembrane segment spans residues Phe-271–Val-291. Over Thr-292–Gly-296 the chain is Lumenal. Residues Val-297–Phe-317 form a helical membrane-spanning segment. At Glu-318 to Arg-366 the chain is on the cytoplasmic side. The chain crosses the membrane as a helical span at residues Asp-367–Leu-387. Residues Arg-388 to Gln-389 lie on the Lumenal side of the membrane. The helical transmembrane segment at Phe-390–Thr-410 threads the bilayer. Topologically, residues Thr-411–Arg-476 are cytoplasmic. Residues Phe-477–Pro-497 traverse the membrane as a helical segment. Residues Phe-498–Pro-601 lie on the Lumenal side of the membrane. Residues Ile-602–Phe-622 form a helical membrane-spanning segment. Residues Asn-623–Glu-1130 lie on the Cytoplasmic side of the membrane. Glu-792 acts as the Charge relay system in catalysis. Ser-798–Lys-804 contributes to the CoA binding site. NADP(+) is bound by residues Ser-859–Phe-861 and Asp-886–Ser-894. The Charge relay system role is filled by Lys-926. Val-955–Lys-957 is a CoA binding site. Asp-1002 (charge relay system) is an active-site residue. Ala-1097 to His-1098 contributes to the CoA binding site. The active-site Proton donor is the His-1098. Asn-1102 to Arg-1103 serves as a coordination point for NADP(+). The segment covering Arg-1103 to Arg-1122 has biased composition (low complexity). The segment at Arg-1103–Glu-1130 is disordered.

Belongs to the HMG-CoA reductase family.

It localises to the endoplasmic reticulum membrane. It carries out the reaction (R)-mevalonate + 2 NADP(+) + CoA = (3S)-3-hydroxy-3-methylglutaryl-CoA + 2 NADPH + 2 H(+). Its pathway is metabolic intermediate biosynthesis; (R)-mevalonate biosynthesis; (R)-mevalonate from acetyl-CoA: step 3/3. HMG-CoA reductase; part of the first module of ergosterol biosynthesis pathway that includes the early steps of the pathway, conserved across all eukaryotes, and which results in the formation of mevalonate from acetyl-coenzyme A (acetyl-CoA). Hmg1 and hmg2 catalyze the reduction of hydroxymethylglutaryl-CoA (HMG-CoA) to mevalonate. The first module starts with the action of the cytosolic acetyl-CoA acetyltransferase erg10B that catalyzes the formation of acetoacetyl-CoA. The hydroxymethylglutaryl-CoA synthases erg13A and erg13B then condense acetyl-CoA with acetoacetyl-CoA to form HMG-CoA. The rate-limiting step of the early module is the reduction to mevalonate by the 3-hydroxy-3-methylglutaryl-coenzyme A (HMG-CoA) reductases hmg1 and hmg2. Mevalonate is also a precursor for the extracellular siderophore triacetylfusarinine C (TAFC). This Aspergillus fumigatus (strain ATCC MYA-4609 / CBS 101355 / FGSC A1100 / Af293) (Neosartorya fumigata) protein is 3-hydroxy-3-methylglutaryl-coenzyme A reductase 1.